The following is a 321-amino-acid chain: MKFAKKYEKYMKGMDEELPGVGLKRLKKLLKKCRSDLQSHENDGSSAGRCPGHCSVCDGSFFPSLLNEMSAVVGCFNEKAKKLLELHLASGFKKYTMWFTSKGHKSHGALIQQGKDLVTYAIINAVAMRKILKKYDKIHYSKQGQEFKAQAQSLHIEILQSPWLCELMAFYMNLRRSKKNNGAMELFGDCSLVFDDDKPTISCNLFDSMRVDISLTCSICLDTVFDPVALSCGHIYCYLCSCSAASVTIVDGLKSAERKSKCPLCRQAGVFPNAVHLDELNMLLSYSCPEYWEKRIQMERVERVRLAKEHWESQCRAFLGM.

The region spanning 1–149 (MKFAKKYEKY…YSKQGQEFKA (149 aa)) is the SPX domain. An RING-type zinc finger spans residues 217 to 266 (CSICLDTVFDPVALSCGHIYCYLCSCSAASVTIVDGLKSAERKSKCPLCR).

It belongs to the RING-type zinc finger family.

It carries out the reaction S-ubiquitinyl-[E2 ubiquitin-conjugating enzyme]-L-cysteine + [acceptor protein]-L-lysine = [E2 ubiquitin-conjugating enzyme]-L-cysteine + N(6)-ubiquitinyl-[acceptor protein]-L-lysine.. It functions in the pathway protein modification; protein ubiquitination. This Oryza sativa subsp. indica (Rice) protein is Probable E3 ubiquitin-protein ligase BAH1-like 1.